Here is a 260-residue protein sequence, read N- to C-terminus: UPF0246 protein Bxeno_A1262 (260 aa).

This sequence belongs to the UPF0246 family.

This chain is UPF0246 protein Bxeno_A1262, found in Paraburkholderia xenovorans (strain LB400).